A 76-amino-acid chain; its full sequence is Histone H2A (76 aa).

The disordered stretch occupies residues 1 to 23; it reads MSGRGKTGGKARAKAKTRSSRAG. An N-acetylserine; in acipensins modification is found at Ser-2. At Ser-2 the chain carries N-acetylserine; in histone H2A. Ser-2 is modified (phosphoserine; in histone H2A). Lys-6 is subject to N6-(2-hydroxyisobutyryl)lysine. Lys-6 carries the post-translational modification N6-acetyllysine; in histone H2A. Residues 7-19 show a composition bias toward basic residues; that stretch reads TGGKARAKAKTRS. At Lys-10 the chain carries N6-(2-hydroxyisobutyryl)lysine; alternate. Lys-10 is subject to N6-lactoyllysine; alternate. Position 10 is an N6-succinyllysine (Lys-10). Residues Lys-14 and Lys-16 each participate in a glycyl lysine isopeptide (Lys-Gly) (interchain with G-Cter in ubiquitin); in histone H2A cross-link. Lys-37 is subject to N6-(2-hydroxyisobutyryl)lysine; alternate. An N6-(2-hydroxyisobutyryl)lysine mark is found at Lys-65 and Lys-66.

Belongs to the histone H2A family. In terms of assembly, the nucleosome is a histone octamer containing two molecules each of H2A, H2B, H3 and H4 assembled in one H3-H4 heterotetramer and two H2A-H2B heterodimers. The octamer wraps approximately 147 bp of DNA. Post-translationally, phosphorylation on Ser-2 is enhanced during mitosis. Phosphorylation on Ser-2 directly represses transcription.

The protein resides in the nucleus. It localises to the chromosome. Its function is as follows. Core component of nucleosome. Nucleosomes wrap and compact DNA into chromatin, limiting DNA accessibility to the cellular machineries which require DNA as a template. Histones thereby play a central role in transcription regulation, DNA repair, DNA replication and chromosomal stability. DNA accessibility is regulated via a complex set of post-translational modifications of histones, also called histone code, and nucleosome remodeling. Acipensins are antimicrobial peptides. Acipensins 1 and 2 have antibacterial activity against Gram-positive bacteria L.monocytogenes EGD (MIC are 1.1 uM and 1.0 uM, respectively) and S.aureus ATCC 33591 (MIC are 0.9 uM and 0.6 uM, respectively), against Gram-negative bacterium E.coli ML-35p (MIC are 0.7 uM and 0.3 uM, respectively) and antifungal activity against C.albicans 820 (MIC are 1.0 uM and 0.9 uM, respectively). Acipensin 6 has antibacterial activity against Gram-negative bacterium E.coli ML-35p (MIC=2.5 uM). Antimicrobial activity is reduced by high ionic strength. Acipensins 1, 2 and 6 have no hemolytic (up to 40 uM) or cytotoxic (up to 20 uM) effects on human cells in vitro. The polypeptide is Histone H2A (Acipenser gueldenstaedtii (Russian sturgeon)).